Reading from the N-terminus, the 427-residue chain is Enolase 1 (427 aa).

Q162 provides a ligand contact to (2R)-2-phosphoglycerate. E204 serves as the catalytic Proton donor. Residues D241, E285, and D312 each coordinate Mg(2+). 4 residues coordinate (2R)-2-phosphoglycerate: K337, R366, S367, and K388. The Proton acceptor role is filled by K337.

It belongs to the enolase family. Mg(2+) is required as a cofactor.

The protein localises to the cytoplasm. Its subcellular location is the secreted. It localises to the cell surface. The catalysed reaction is (2R)-2-phosphoglycerate = phosphoenolpyruvate + H2O. Its pathway is carbohydrate degradation; glycolysis; pyruvate from D-glyceraldehyde 3-phosphate: step 4/5. In terms of biological role, catalyzes the reversible conversion of 2-phosphoglycerate (2-PG) into phosphoenolpyruvate (PEP). It is essential for the degradation of carbohydrates via glycolysis. The chain is Enolase 1 from Chlorobaculum tepidum (strain ATCC 49652 / DSM 12025 / NBRC 103806 / TLS) (Chlorobium tepidum).